The chain runs to 201 residues: MARYTGPATRKSRRLKVDLVGGDQAFERRPYPPGQHGRARIKETEYLLQLQEKQKAKFTYGVLERQFRSYYEEANRRPGKTGDNLLQVLECRLDNVVYRAGLARTRRMARQLVSHGHFTVNGKKVNIPSYQVSKWDIIDVKQKSLGTTPFIIAKETIGERPVPAWLQVVPSNLRILVHQRPERAQIDTPVTEQLIVELYSK.

Positions 91-157 constitute an S4 RNA-binding domain; the sequence is CRLDNVVYRA…TPFIIAKETI (67 aa).

This sequence belongs to the universal ribosomal protein uS4 family. Part of the 30S ribosomal subunit. Contacts protein S5. The interaction surface between S4 and S5 is involved in control of translational fidelity.

In terms of biological role, one of the primary rRNA binding proteins, it binds directly to 16S rRNA where it nucleates assembly of the body of the 30S subunit. With S5 and S12 plays an important role in translational accuracy. This Saccharopolyspora erythraea (strain ATCC 11635 / DSM 40517 / JCM 4748 / NBRC 13426 / NCIMB 8594 / NRRL 2338) protein is Small ribosomal subunit protein uS4.